The primary structure comprises 100 residues: Urease subunit gamma (100 aa).

Belongs to the urease gamma subunit family. Heterotrimer of UreA (gamma), UreB (beta) and UreC (alpha) subunits. Three heterotrimers associate to form the active enzyme.

It is found in the cytoplasm. It carries out the reaction urea + 2 H2O + H(+) = hydrogencarbonate + 2 NH4(+). Its pathway is nitrogen metabolism; urea degradation; CO(2) and NH(3) from urea (urease route): step 1/1. This is Urease subunit gamma from Rhodopseudomonas palustris (strain ATCC BAA-98 / CGA009).